The sequence spans 166 residues: Deoxyuridine 5'-triphosphate nucleotidohydrolase (166 aa).

Residues 1–24 (MACVNEPSPKLQKLDRNGIHGDSS) are disordered. Position 138 (glutamate 138) interacts with Mg(2+).

Belongs to the dUTPase family. As to quaternary structure, homotrimer. It depends on Mg(2+) as a cofactor.

The enzyme catalyses dUTP + H2O = dUMP + diphosphate + H(+). It functions in the pathway pyrimidine metabolism; dUMP biosynthesis; dUMP from dCTP (dUTP route): step 2/2. In terms of biological role, this enzyme is involved in nucleotide metabolism: it produces dUMP, the immediate precursor of thymidine nucleotides and it decreases the intracellular concentration of dUTP, preventing uracil incorporation into DNA. The polypeptide is Deoxyuridine 5'-triphosphate nucleotidohydrolase (DUT) (Arabidopsis thaliana (Mouse-ear cress)).